Reading from the N-terminus, the 458-residue chain is Argininosuccinate lyase (458 aa).

This sequence belongs to the lyase 1 family. Argininosuccinate lyase subfamily.

It localises to the cytoplasm. The enzyme catalyses 2-(N(omega)-L-arginino)succinate = fumarate + L-arginine. The protein operates within amino-acid biosynthesis; L-arginine biosynthesis; L-arginine from L-ornithine and carbamoyl phosphate: step 3/3. This chain is Argininosuccinate lyase, found in Neisseria meningitidis serogroup A / serotype 4A (strain DSM 15465 / Z2491).